The chain runs to 359 residues: Nicotinate-nucleotide--dimethylbenzimidazole phosphoribosyltransferase (359 aa).

The active-site Proton acceptor is the E318.

The protein belongs to the CobT family. In terms of assembly, homodimer.

The catalysed reaction is 5,6-dimethylbenzimidazole + nicotinate beta-D-ribonucleotide = alpha-ribazole 5'-phosphate + nicotinate + H(+). It participates in nucleoside biosynthesis; alpha-ribazole biosynthesis; alpha-ribazole from 5,6-dimethylbenzimidazole: step 1/2. Its function is as follows. Catalyzes the synthesis of alpha-ribazole-5'-phosphate from nicotinate mononucleotide (NAMN) and 5,6-dimethylbenzimidazole (DMB). In Shigella flexneri serotype 5b (strain 8401), this protein is Nicotinate-nucleotide--dimethylbenzimidazole phosphoribosyltransferase.